Here is a 439-residue protein sequence, read N- to C-terminus: Cln5-like protein 3 (439 aa).

The N-terminal stretch at 1 to 24 (MKNMLNIILTLTIIFIGLIKISIS) is a signal peptide. 10 N-linked (GlcNAc...) asparagine glycosylation sites follow: N93, N112, N122, N138, N168, N219, N268, N289, N304, and N359. Residues 371–391 (IIFISIAIGFGVVIILYISIG) form a helical membrane-spanning segment.

This sequence belongs to the CLN5 family.

The protein resides in the membrane. The polypeptide is Cln5-like protein 3 (cln5lc) (Dictyostelium discoideum (Social amoeba)).